The primary structure comprises 282 residues: Ribosomal RNA small subunit methyltransferase A (282 aa).

Residues Asn28, Leu30, Gly55, Glu77, Asp103, and Asn123 each coordinate S-adenosyl-L-methionine.

Belongs to the class I-like SAM-binding methyltransferase superfamily. rRNA adenine N(6)-methyltransferase family. RsmA subfamily.

It localises to the cytoplasm. It carries out the reaction adenosine(1518)/adenosine(1519) in 16S rRNA + 4 S-adenosyl-L-methionine = N(6)-dimethyladenosine(1518)/N(6)-dimethyladenosine(1519) in 16S rRNA + 4 S-adenosyl-L-homocysteine + 4 H(+). Functionally, specifically dimethylates two adjacent adenosines (A1518 and A1519) in the loop of a conserved hairpin near the 3'-end of 16S rRNA in the 30S particle. May play a critical role in biogenesis of 30S subunits. The chain is Ribosomal RNA small subunit methyltransferase A from Afipia carboxidovorans (strain ATCC 49405 / DSM 1227 / KCTC 32145 / OM5) (Oligotropha carboxidovorans).